The chain runs to 374 residues: Glyceraldehyde-3-phosphate dehydrogenase A, chloroplastic (374 aa).

A chloroplast-targeting transit peptide spans 1–34 (MAAMMQKSAFTGSAVSSKSGVRAKAARAVVDVRA). NADP(+) contacts are provided by residues 47–48 (RI), D71, and R116. C55 and C325 are oxidised to a cystine. Residues 189–191 (SCT), T220, R235, 248–249 (TG), and R271 contribute to the D-glyceraldehyde 3-phosphate site. C190 functions as the Nucleophile in the catalytic mechanism. N353 serves as a coordination point for NADP(+).

This sequence belongs to the glyceraldehyde-3-phosphate dehydrogenase family. Homotetramer. Component of a complex that contains two dimers of PRK, two tetramers of GAPDH and CP12. CP12 associates with GAPDH, causing its conformation to change. This GAPDH/CP12 complex binds PRK to form a half-complex (one unit). This unit probably dimerizes due partially to interactions between the enzymes of each unit.

It is found in the plastid. The protein resides in the chloroplast. The catalysed reaction is D-glyceraldehyde 3-phosphate + phosphate + NADP(+) = (2R)-3-phospho-glyceroyl phosphate + NADPH + H(+). It participates in carbohydrate biosynthesis; Calvin cycle. The polypeptide is Glyceraldehyde-3-phosphate dehydrogenase A, chloroplastic (GAPA) (Chlamydomonas reinhardtii (Chlamydomonas smithii)).